The primary structure comprises 176 residues: Transcriptional repressor NrdR (176 aa).

A zinc finger spans residues 3-34; it reads CPYCGSLETQVKDSRPTDDASAIRRRRVCPDC. The region spanning 49–139 is the ATP-cone domain; sequence LTVLKKSGRR…VYRNFREARD (91 aa). Residues 147-176 form a disordered region; it reads LDGAAQPEAPSKDDGGTDEPPAKTRAPTRA.

This sequence belongs to the NrdR family. Zn(2+) is required as a cofactor.

Negatively regulates transcription of bacterial ribonucleotide reductase nrd genes and operons by binding to NrdR-boxes. The polypeptide is Transcriptional repressor NrdR (Methylocella silvestris (strain DSM 15510 / CIP 108128 / LMG 27833 / NCIMB 13906 / BL2)).